The primary structure comprises 378 residues: Ribosomal RNA large subunit methyltransferase G (378 aa).

The protein belongs to the methyltransferase superfamily. RlmG family.

The protein localises to the cytoplasm. The catalysed reaction is guanosine(1835) in 23S rRNA + S-adenosyl-L-methionine = N(2)-methylguanosine(1835) in 23S rRNA + S-adenosyl-L-homocysteine + H(+). In terms of biological role, specifically methylates the guanine in position 1835 (m2G1835) of 23S rRNA. This Shigella dysenteriae serotype 1 (strain Sd197) protein is Ribosomal RNA large subunit methyltransferase G.